The following is a 117-amino-acid chain: Large ribosomal subunit protein uL18 (117 aa).

It belongs to the universal ribosomal protein uL18 family. In terms of assembly, part of the 50S ribosomal subunit; part of the 5S rRNA/L5/L18/L25 subcomplex. Contacts the 5S and 23S rRNAs.

Its function is as follows. This is one of the proteins that bind and probably mediate the attachment of the 5S RNA into the large ribosomal subunit, where it forms part of the central protuberance. The protein is Large ribosomal subunit protein uL18 of Klebsiella pneumoniae subsp. pneumoniae (strain ATCC 700721 / MGH 78578).